A 419-amino-acid chain; its full sequence is Glutamyl-tRNA reductase (419 aa).

Residues 49–52 (TCNR), Ser107, 112–114 (EPQ), and Gln118 each bind substrate. Cys50 serves as the catalytic Nucleophile. 187-192 (GAGETI) is an NADP(+) binding site.

It belongs to the glutamyl-tRNA reductase family. Homodimer.

The catalysed reaction is (S)-4-amino-5-oxopentanoate + tRNA(Glu) + NADP(+) = L-glutamyl-tRNA(Glu) + NADPH + H(+). Its pathway is porphyrin-containing compound metabolism; protoporphyrin-IX biosynthesis; 5-aminolevulinate from L-glutamyl-tRNA(Glu): step 1/2. In terms of biological role, catalyzes the NADPH-dependent reduction of glutamyl-tRNA(Glu) to glutamate 1-semialdehyde (GSA). This chain is Glutamyl-tRNA reductase, found in Vibrio atlanticus (strain LGP32) (Vibrio splendidus (strain Mel32)).